A 317-amino-acid polypeptide reads, in one-letter code: Melanocyte-stimulating hormone receptor (317 aa).

The Extracellular segment spans residues 1-37 (MPALGSPRRLLGSLNCTPPATLPLTLAPNRTGPQCLE). The N-linked (GlcNAc...) asparagine glycan is linked to asparagine 29. A helical membrane pass occupies residues 38 to 63 (VSIPDGLFLSLGLVSLVENVLVVAAI). The Cytoplasmic segment spans residues 64–72 (AKNRNLHSP). The chain crosses the membrane as a helical span at residues 73–93 (MYYFICCLAMSDLLVSVSNVL). Topologically, residues 94–118 (ETAVMLLLEAGVLATRAAVVQQLDN) are extracellular. Residues 119–140 (VIDVLICSSMVSSLCFLGAIAV) traverse the membrane as a helical segment. At 141-163 (DRYISIFYALRYHSVVTLPRAWR) the chain is on the cytoplasmic side. Residues 164 to 183 (IIAAIWVASILTSVLSITYY) traverse the membrane as a helical segment. At 184-191 (NHTVVLLC) the chain is on the extracellular side. Residues 192 to 211 (LVGFFIAMLALMAVLYVHML) form a helical membrane-spanning segment. The Cytoplasmic portion of the chain corresponds to 212–240 (ARACQHARGIARLQKRQRPIHQGFGLKGA). A helical membrane pass occupies residues 241–266 (ATLTILLGVFFLCWGPFFLHLSLIVL). Residues 267-279 (CPQHPTCGCIFKN) lie on the Extracellular side of the membrane. Residues 280 to 300 (FNLFLALIICNAIVDPLIYAF) form a helical membrane-spanning segment. Over 301–317 (RSQELRKTLQEVLQCSW) the chain is Cytoplasmic. Cysteine 315 is lipidated: S-palmitoyl cysteine.

This sequence belongs to the G-protein coupled receptor 1 family. As to quaternary structure, interacts with MGRN1, but does not undergo MGRN1-mediated ubiquitination; this interaction competes with GNAS-binding and thus inhibits agonist-induced cAMP production. Interacts with OPN3; the interaction results in a decrease in MC1R-mediated cAMP signaling and ultimately a decrease in melanin production in melanocytes.

The protein localises to the cell membrane. Functionally, receptor for MSH (alpha, beta and gamma) and ACTH. The activity of this receptor is mediated by G proteins which activate adenylate cyclase. Mediates melanogenesis, the production of eumelanin (black/brown) and phaeomelanin (red/yellow), via regulation of cAMP signaling in melanocytes. The protein is Melanocyte-stimulating hormone receptor (MC1R) of Capra hircus (Goat).